Here is a 273-residue protein sequence, read N- to C-terminus: Pyridoxal phosphate homeostasis protein (273 aa).

A Phosphoserine modification is found at serine 6. N6-(pyridoxal phosphate)lysine is present on lysine 47. At tyrosine 69 the chain carries Phosphotyrosine. Lysine 125 carries the N6-succinyllysine modification. A phosphoserine mark is found at serine 226 and serine 244. Over residues 251–260 the composition is skewed to basic and acidic residues; the sequence is DYSKKTDKPA. Residues 251–273 are disordered; sequence DYSKKTDKPAAELQAPEEVAQAH.

It belongs to the pyridoxal phosphate-binding protein YggS/PROSC family.

In terms of biological role, pyridoxal 5'-phosphate (PLP)-binding protein, which may be involved in intracellular homeostatic regulation of pyridoxal 5'-phosphate (PLP), the active form of vitamin B6. This Bos taurus (Bovine) protein is Pyridoxal phosphate homeostasis protein.